The following is a 343-amino-acid chain: N-acetyl-gamma-glutamyl-phosphate reductase (343 aa).

Residue Cys147 is part of the active site.

The protein belongs to the NAGSA dehydrogenase family. Type 1 subfamily.

The protein localises to the cytoplasm. It catalyses the reaction N-acetyl-L-glutamate 5-semialdehyde + phosphate + NADP(+) = N-acetyl-L-glutamyl 5-phosphate + NADPH + H(+). The protein operates within amino-acid biosynthesis; L-arginine biosynthesis; N(2)-acetyl-L-ornithine from L-glutamate: step 3/4. In terms of biological role, catalyzes the NADPH-dependent reduction of N-acetyl-5-glutamyl phosphate to yield N-acetyl-L-glutamate 5-semialdehyde. This is N-acetyl-gamma-glutamyl-phosphate reductase from Listeria innocua serovar 6a (strain ATCC BAA-680 / CLIP 11262).